A 274-amino-acid chain; its full sequence is MSQVVQTRRLQAVDLIKRKAEGRKIISLTAYHAHTAGIVDAYCDFVLVGDSLGMVMHGMESTLPVTLEMMILQAQAVMRGTSRALVVVDMPFGSYEASREQAFLNAARVLKETGAGAIKLEGGARFAETVAFLTERGVPVMGHIGLTPQSVNTMGGFKVQGHGAGDEDRLRADARAISDAGAFAIVLEGIVEPVARAIATDPAIRAATIGIGATAACDGQILVLEDMLGLSDRVPRFVKSYGSLRAHIEEAVRAYADEVQAGRFPAEGHTYPPR.

2 residues coordinate Mg(2+): Asp50 and Asp89. Residues 50-51, Asp89, and Lys119 each bind 3-methyl-2-oxobutanoate; that span reads DS. Glu121 contacts Mg(2+). Glu188 acts as the Proton acceptor in catalysis.

The protein belongs to the PanB family. In terms of assembly, homodecamer; pentamer of dimers. The cofactor is Mg(2+).

Its subcellular location is the cytoplasm. It carries out the reaction 3-methyl-2-oxobutanoate + (6R)-5,10-methylene-5,6,7,8-tetrahydrofolate + H2O = 2-dehydropantoate + (6S)-5,6,7,8-tetrahydrofolate. Its pathway is cofactor biosynthesis; (R)-pantothenate biosynthesis; (R)-pantoate from 3-methyl-2-oxobutanoate: step 1/2. In terms of biological role, catalyzes the reversible reaction in which hydroxymethyl group from 5,10-methylenetetrahydrofolate is transferred onto alpha-ketoisovalerate to form ketopantoate. In Methylorubrum extorquens (strain PA1) (Methylobacterium extorquens), this protein is 3-methyl-2-oxobutanoate hydroxymethyltransferase.